The primary structure comprises 200 residues: Molybdenum cofactor guanylyltransferase (200 aa).

GTP contacts are provided by residues 15–17 (LSG), lysine 28, aspartate 74, and aspartate 104. Aspartate 104 is a Mg(2+) binding site.

This sequence belongs to the MobA family. As to quaternary structure, monomer. It depends on Mg(2+) as a cofactor.

The protein localises to the cytoplasm. It catalyses the reaction Mo-molybdopterin + GTP + H(+) = Mo-molybdopterin guanine dinucleotide + diphosphate. Its function is as follows. Transfers a GMP moiety from GTP to Mo-molybdopterin (Mo-MPT) cofactor (Moco or molybdenum cofactor) to form Mo-molybdopterin guanine dinucleotide (Mo-MGD) cofactor. The protein is Molybdenum cofactor guanylyltransferase of Pseudomonas fluorescens (strain SBW25).